A 123-amino-acid polypeptide reads, in one-letter code: Potassium voltage-gated channel subfamily E member 2 (123 aa).

2 N-linked (GlcNAc...) asparagine glycosylation sites follow: Asn-6 and Asn-29. Residues 49-69 (VILYLMVMIGMFAFIVVAILV) form a helical membrane-spanning segment. Over 70–123 (STVKSKRREHSQDPYHQYIVEDWQQKYRSQILHLEDSKATIHENLGATGFTVSP) the chain is Cytoplasmic.

This sequence belongs to the potassium channel KCNE family. Interacts with KCNB1. Associates with KCNH2/ERG1. May associate with KCNQ2 and KCNQ3. Associates with HCN1 and probably HCN2. Heteromultimer with KCNC2. Interacts with KCNC2. Interacts with KCNQ1; forms a heterooligomer complex that targets to the membrane raft and leading to currents with an apparently instantaneous activation, a rapid deactivation process and a linear current-voltage relationship and decreases the amplitude of the outward current.

Its subcellular location is the cell membrane. It is found in the apical cell membrane. Its function is as follows. Ancillary protein that functions as a regulatory subunit of the voltage-gated potassium (Kv) channel complex composed of pore-forming and potassium-conducting alpha subunits and of regulatory beta subunits. KCNE2 beta subunit modulates the gating kinetics and enhances stability of the channel complex. Alters the gating of the delayed rectifier Kv channel containing KCNB1 alpha subunit. Associates with KCNH2/HERG alpha subunit Kv channel to form the rapidly activating component of the delayed rectifying potassium current (IKr) in heart. May associate with KCNQ2 and/or KCNQ3 alpha subunits to modulate the native M-type current. May associate with HCN1 and HCN2 channel subunits to increase potassium current. Forms a heterooligomer complex with KCNQ1/KVLQT1 alpha subunits which leads to currents with an apparently instantaneous activation, a rapid deactivation process and a linear current-voltage relationship and decreases the amplitude of the outward current. KCNQ1-KCNE2 channel associates with Na(+)-coupled myo-inositol symporter in the apical membrane of choroid plexus epithelium and regulates the myo-inositol gradient between blood and cerebrospinal fluid with an impact on neuron excitability. This chain is Potassium voltage-gated channel subfamily E member 2 (Kcne2), found in Cavia porcellus (Guinea pig).